A 172-amino-acid polypeptide reads, in one-letter code: Shikimate kinase (172 aa).

11–16 (GAGKST) contributes to the ATP binding site. Residue Ser15 participates in Mg(2+) binding. Residues Asp33, Arg57, and Gly79 each coordinate substrate. Arg117 contributes to the ATP binding site. Arg136 provides a ligand contact to substrate. Arg153 is a binding site for ATP.

Belongs to the shikimate kinase family. In terms of assembly, monomer. Mg(2+) serves as cofactor.

The protein localises to the cytoplasm. It carries out the reaction shikimate + ATP = 3-phosphoshikimate + ADP + H(+). It participates in metabolic intermediate biosynthesis; chorismate biosynthesis; chorismate from D-erythrose 4-phosphate and phosphoenolpyruvate: step 5/7. In terms of biological role, catalyzes the specific phosphorylation of the 3-hydroxyl group of shikimic acid using ATP as a cosubstrate. This is Shikimate kinase from Pseudomonas fluorescens (strain Pf0-1).